The primary structure comprises 326 residues: Pyruvate dehydrogenase E1 component subunit beta (326 aa).

Glutamate 59 contributes to the thiamine diphosphate binding site.

As to quaternary structure, heterodimer of an alpha and a beta chain. The cofactor is thiamine diphosphate.

It catalyses the reaction N(6)-[(R)-lipoyl]-L-lysyl-[protein] + pyruvate + H(+) = N(6)-[(R)-S(8)-acetyldihydrolipoyl]-L-lysyl-[protein] + CO2. In terms of biological role, the pyruvate dehydrogenase complex catalyzes the overall conversion of pyruvate to acetyl-CoA and CO(2). It contains multiple copies of three enzymatic components: pyruvate dehydrogenase (E1), dihydrolipoamide acetyltransferase (E2) and lipoamide dehydrogenase (E3). This Rickettsia felis (strain ATCC VR-1525 / URRWXCal2) (Rickettsia azadi) protein is Pyruvate dehydrogenase E1 component subunit beta (pdhB).